Consider the following 84-residue polypeptide: MAPLFSSKKFLVDGLSSIVDAPLINFLLRSIIVAKSTLSTRTNPYSLNTLTISFFLIMYSVIGVDIVDGLYTTILSSAIFSTDI.

This is an uncharacterized protein from Bos taurus (Bovine).